We begin with the raw amino-acid sequence, 193 residues long: Thymidine kinase (193 aa).

Residues 16 to 23 (GPMFSGKS) and 89 to 92 (DEIQ) each bind ATP. Catalysis depends on glutamate 90, which acts as the Proton acceptor. The Zn(2+) site is built by cysteine 146, cysteine 149, cysteine 184, and cysteine 187.

This sequence belongs to the thymidine kinase family. Homotetramer.

It is found in the cytoplasm. It carries out the reaction thymidine + ATP = dTMP + ADP + H(+). This Caldanaerobacter subterraneus subsp. tengcongensis (strain DSM 15242 / JCM 11007 / NBRC 100824 / MB4) (Thermoanaerobacter tengcongensis) protein is Thymidine kinase.